We begin with the raw amino-acid sequence, 104 residues long: Probable guanidinium efflux system subunit GdnD (104 aa).

4 helical membrane-spanning segments follow: residues 3–23 (WICL…MNQF), 31–51 (WIFL…LAME), 58–78 (AYAV…ILFY), and 84–104 (GKRI…KLIS).

The protein belongs to the drug/metabolite transporter (DMT) superfamily. Small multidrug resistance (SMR) (TC 2.A.7.1) family. YkkC/YkkD subfamily. As to quaternary structure, the efflux pump is composed of GdnC and GdnD.

It localises to the cell membrane. Probably involved in guanidinium transport. This chain is Probable guanidinium efflux system subunit GdnD, found in Bacillus licheniformis (strain ATCC 14580 / DSM 13 / JCM 2505 / CCUG 7422 / NBRC 12200 / NCIMB 9375 / NCTC 10341 / NRRL NRS-1264 / Gibson 46).